A 360-amino-acid chain; its full sequence is Alanine racemase (360 aa).

The active-site Proton acceptor; specific for D-alanine is the K34. K34 carries the post-translational modification N6-(pyridoxal phosphate)lysine. R129 provides a ligand contact to substrate. Residue Y254 is the Proton acceptor; specific for L-alanine of the active site. Substrate is bound at residue M302.

This sequence belongs to the alanine racemase family. Requires pyridoxal 5'-phosphate as cofactor.

The catalysed reaction is L-alanine = D-alanine. It participates in amino-acid biosynthesis; D-alanine biosynthesis; D-alanine from L-alanine: step 1/1. Functionally, catalyzes the interconversion of L-alanine and D-alanine. May also act on other amino acids. The sequence is that of Alanine racemase (alr) from Pectobacterium atrosepticum (strain SCRI 1043 / ATCC BAA-672) (Erwinia carotovora subsp. atroseptica).